A 614-amino-acid chain; its full sequence is MLDFVVIFTKGGVVLWHSNASGNSFASCINSLIRGVILEERNTEAKYYEEDHLAVQFKLDNELDLVYAAIFQKVIKLNYLDGFLADMQAAFKEKYGDIRLGDDYDFDREYRRVLSAAEEASAKQVKAPKTMRSYNESQKSKKTVASMIQDDKKPVEKRVNIQEAPPPSKSQPSSPPTGSPMDKIIMEKRRKLREKLTPTKKTSPSDSKSSKPEKAGKKPRVWDLGGNSKDAALLDRSRDSPDDVQYQNINSELVGTMQGVIRDLDVESEDEADNEDASSEGEAEEQVQSKKGKRGGLLSYFKGIVGAKTMSLADLQPALEKMRDHLISKNVASEIAAKLCDSVAASLDGKQMGTFDSIASQVKEALTESLVRILSPKRRIDIIRDALESKRNGRPYTIIFCGVNGVGKSTNLAKICFWLIENDFNVLIAACDTFRAGAVEQLRTHTRHLNALHPAAKHDGRNMVQLYEKGYGKDAAGIAMEAIKFAHDTRVDVVLVDTAGRMQDNEPLMRSLSKLIKVNNPDLVLFVGEALVGNEAVDQLVKFNQSLADYSSNENPHIIDGIVLTKFDTIDDKVGAAISMTYITGQPIVFVGTGQTYADLKAINVNAVVNSLMK.

A disordered region spans residues 119–244; the sequence is EASAKQVKAP…DRSRDSPDDV (126 aa). Residues 149 to 160 show a composition bias toward basic and acidic residues; that stretch reads QDDKKPVEKRVN. The span at 164–178 shows a compositional bias: pro residues; sequence APPPSKSQPSSPPTG. Over residues 232 to 241 the composition is skewed to basic and acidic residues; sequence ALLDRSRDSP. Phosphoserine occurs at positions 237 and 240. The residue at position 246 (Tyr246) is a Phosphotyrosine. Phosphoserine occurs at positions 268, 278, and 279. Residues 268 to 285 are compositionally biased toward acidic residues; it reads SEDEADNEDASSEGEAEE. Residues 268–290 are disordered; it reads SEDEADNEDASSEGEAEEQVQSK. The segment at 396 to 613 is NG domain; sequence YTIIFCGVNG…NVNAVVNSLM (218 aa). GTP is bound by residues 402–409, 497–501, and 565–568; these read GVNGVGKS, DTAGR, and TKFD.

Belongs to the GTP-binding SRP family. In terms of assembly, heterodimer of SrpRalpha and SrpRbeta. In 8-9 hours embryos, expression is seen in a segmental pattern along embryonic ventral midline.

It localises to the endoplasmic reticulum membrane. In terms of biological role, component of the SRP (signal recognition particle) receptor. Ensures, in conjunction with the signal recognition particle, the correct targeting of the nascent secretory proteins to the endoplasmic reticulum membrane system. Forms a guanosine 5'-triphosphate (GTP)-dependent complex with the SRP subunit Srp54. SRP receptor compaction and GTPase rearrangement drive SRP-mediated cotranslational protein translocation into the ER. May have a role in axonogenesis. In Drosophila melanogaster (Fruit fly), this protein is Signal recognition particle receptor subunit alpha homolog.